The primary structure comprises 559 residues: Neutral amino acid transporter 9 (559 aa).

Topologically, residues methionine 1–serine 118 are cytoplasmic. The helical transmembrane segment at leucine 119–tryptophan 139 threads the bilayer. The segment at threonine 128 to serine 133 is important for arginine binding and amino acid transport. Serine 133 lines the arginine pocket. Over glycine 140 to glycine 145 the chain is Lumenal. The helical transmembrane segment at phenylalanine 146–arginine 166 threads the bilayer. Over valine 167–glutamine 197 the chain is Cytoplasmic. Residues tryptophan 198 to phenylalanine 224 form a helical membrane-spanning segment. Residues asparagine 225–arginine 281 lie on the Lumenal side of the membrane. Asparagine 238, asparagine 247, and asparagine 264 each carry an N-linked (GlcNAc...) asparagine glycan. Cysteine 254 and cysteine 422 are oxidised to a cystine. The chain crosses the membrane as a helical span at residues tryptophan 282–leucine 298. Over proline 299–serine 307 the chain is Cytoplasmic. The chain crosses the membrane as a helical span at residues phenylalanine 308–isoleucine 332. Residues arginine 333 to arginine 354 are Lumenal-facing. The helical transmembrane segment at alanine 355–isoleucine 375 threads the bilayer. Topologically, residues threonine 376–cysteine 392 are cytoplasmic. The chain crosses the membrane as a helical span at residues isoleucine 393–phenylalanine 413. Topologically, residues proline 414–aspartate 435 are lumenal. Residues threonine 436–leucine 456 traverse the membrane as a helical segment. The CARC motif signature appears at arginine 442–valine 452. Residues leucine 455 to arginine 461 carry the CRAC motif motif. Over glycine 457–phenylalanine 477 the chain is Cytoplasmic. The chain crosses the membrane as a helical span at residues histidine 478–proline 498. Residues asparagine 499–arginine 505 are Lumenal-facing. A helical transmembrane segment spans residues tyrosine 506 to leucine 526. Topologically, residues serine 527–lysine 538 are cytoplasmic. The helical transmembrane segment at leucine 539–methionine 559 threads the bilayer.

Belongs to the amino acid/polyamine transporter 2 family. SLC38A9 subfamily. Associated component of the Ragulator complex (composed of LAMTOR1, LAMTOR2, LAMTOR3, LAMTOR4 and LAMTOR5). Associated component of the Rag GTPases heterodimers (composed of RRAGA, RRAGB, RRAGC and RRAGD); this interaction is independent of the Ragulator complex but depends on the nucleotide loading state of the Rag GTPase heterodimer. Interacts with TM4SF5. Interacts with NPC1; this interaction inhibits cholesterol-mediated mTORC1 activation via its sterol transport activity. Post-translationally, glycosylated.

It is found in the lysosome membrane. The protein resides in the late endosome membrane. The enzyme catalyses L-leucine(in) = L-leucine(out). The catalysed reaction is L-tyrosine(in) = L-tyrosine(out). It catalyses the reaction L-glutamine(out) = L-glutamine(in). It carries out the reaction L-asparagine(out) = L-asparagine(in). Functionally, lysosomal amino acid transporter involved in the activation of mTORC1 in response to amino acid levels. Probably acts as an amino acid sensor of the Rag GTPases and Ragulator complexes, 2 complexes involved in amino acid sensing and activation of mTORC1, a signaling complex promoting cell growth in response to growth factors, energy levels, and amino acids. Following activation by amino acids, the Ragulator and Rag GTPases function as a scaffold recruiting mTORC1 to lysosomes where it is in turn activated. SLC38A9 mediates transport of amino acids with low capacity and specificity with a slight preference for polar amino acids. Acts as an arginine sensor. Following activation by arginine binding, mediates transport of L-glutamine, leucine and tyrosine with high efficiency, and is required for the efficient utilization of these amino acids after lysosomal protein degradation. However, the transport mechanism is not well defined and the role of sodium is not clear. Can disassemble the lysosomal folliculin complex (LFC), and thereby triggers GAP activity of FLCN:FNIP2 toward RRAGC. Acts as an cholesterol sensor that conveys increases in lysosomal cholesterol, leading to lysosomal recruitment and activation of mTORC1 via the Rag GTPases. Guanine exchange factor (GEF) that, upon arginine binding, stimulates GDP release from RRAGA and therefore activates the Rag GTPase heterodimer and the mTORC1 pathway in response to nutrient sufficiency. In Rattus norvegicus (Rat), this protein is Neutral amino acid transporter 9.